Reading from the N-terminus, the 360-residue chain is Peptide chain release factor 1 (360 aa).

N5-methylglutamine is present on Gln235.

The protein belongs to the prokaryotic/mitochondrial release factor family. Methylated by PrmC. Methylation increases the termination efficiency of RF1.

It is found in the cytoplasm. Its function is as follows. Peptide chain release factor 1 directs the termination of translation in response to the peptide chain termination codons UAG and UAA. This chain is Peptide chain release factor 1, found in Burkholderia ambifaria (strain MC40-6).